The following is a 387-amino-acid chain: Succinate--CoA ligase [ADP-forming] subunit beta (387 aa).

The ATP-grasp domain maps to 9 to 245 (KDLLESYGLK…KSQENAKELK (237 aa)). ATP-binding positions include Lys46, 53-55 (GRG), Glu100, Tyr103, and Glu108. 2 residues coordinate Mg(2+): Asn200 and Asp214. Substrate is bound by residues Asn265 and 322–324 (GIV).

It belongs to the succinate/malate CoA ligase beta subunit family. Heterotetramer of two alpha and two beta subunits. Mg(2+) is required as a cofactor.

It carries out the reaction succinate + ATP + CoA = succinyl-CoA + ADP + phosphate. The enzyme catalyses GTP + succinate + CoA = succinyl-CoA + GDP + phosphate. Its pathway is carbohydrate metabolism; tricarboxylic acid cycle; succinate from succinyl-CoA (ligase route): step 1/1. Succinyl-CoA synthetase functions in the citric acid cycle (TCA), coupling the hydrolysis of succinyl-CoA to the synthesis of either ATP or GTP and thus represents the only step of substrate-level phosphorylation in the TCA. The beta subunit provides nucleotide specificity of the enzyme and binds the substrate succinate, while the binding sites for coenzyme A and phosphate are found in the alpha subunit. In Francisella tularensis subsp. holarctica (strain OSU18), this protein is Succinate--CoA ligase [ADP-forming] subunit beta.